An 89-amino-acid chain; its full sequence is Small ribosomal subunit protein uS15 (89 aa).

Positions 1-22 (MPLSKEQKQEVMEKYKLHEHDT) are disordered.

It belongs to the universal ribosomal protein uS15 family. In terms of assembly, part of the 30S ribosomal subunit. Forms a bridge to the 50S subunit in the 70S ribosome, contacting the 23S rRNA.

In terms of biological role, one of the primary rRNA binding proteins, it binds directly to 16S rRNA where it helps nucleate assembly of the platform of the 30S subunit by binding and bridging several RNA helices of the 16S rRNA. Functionally, forms an intersubunit bridge (bridge B4) with the 23S rRNA of the 50S subunit in the ribosome. The polypeptide is Small ribosomal subunit protein uS15 (Natranaerobius thermophilus (strain ATCC BAA-1301 / DSM 18059 / JW/NM-WN-LF)).